Reading from the N-terminus, the 282-residue chain is Large ribosomal subunit protein uL2 (282 aa).

Disordered regions lie at residues 31–55 (KRLT…RHIG) and 223–282 (LAMN…NTQR). 2 stretches are compositionally biased toward basic residues: residues 34-55 (TKPV…RHIG) and 270-282 (VTRR…NTQR).

Belongs to the universal ribosomal protein uL2 family. Part of the 50S ribosomal subunit. Forms a bridge to the 30S subunit in the 70S ribosome.

Functionally, one of the primary rRNA binding proteins. Required for association of the 30S and 50S subunits to form the 70S ribosome, for tRNA binding and peptide bond formation. It has been suggested to have peptidyltransferase activity; this is somewhat controversial. Makes several contacts with the 16S rRNA in the 70S ribosome. The sequence is that of Large ribosomal subunit protein uL2 from Anaeromyxobacter dehalogenans (strain 2CP-C).